The chain runs to 284 residues: Elongation factor Ts (284 aa).

Residues 80-83 (TDFV) form an involved in Mg(2+) ion dislocation from EF-Tu region.

Belongs to the EF-Ts family.

Its subcellular location is the cytoplasm. Functionally, associates with the EF-Tu.GDP complex and induces the exchange of GDP to GTP. It remains bound to the aminoacyl-tRNA.EF-Tu.GTP complex up to the GTP hydrolysis stage on the ribosome. The polypeptide is Elongation factor Ts (Neisseria meningitidis serogroup A / serotype 4A (strain DSM 15465 / Z2491)).